A 358-amino-acid polypeptide reads, in one-letter code: Vanillin synthase (358 aa).

Positions 1-21 (MARLLLLLVGVLIACAAGARA) are cleaved as a signal peptide. The propeptide at 22–140 (GSEFLAEDNP…RGNHKLTSAI (119 aa)) is activation peptide. N125 carries an N-linked (GlcNAc...) asparagine glycan. Intrachain disulfides connect C162–C205 and C196–C238. The active site involves C165. N-linked (GlcNAc...) asparagine glycosylation is present at N254. Cysteines 296 and 346 form a disulfide. Residues H305 and N325 contribute to the active site.

It belongs to the peptidase C1 family.

It carries out the reaction (E)-ferulate + H2O = vanillin + acetate. The catalysed reaction is 4-O-beta-D-glucosyl-trans-ferulate + H2O = 4-O-beta-D-glucosyl-vanillin + acetate. It functions in the pathway aromatic compound metabolism; phenylpropanoid biosynthesis. Involved in the biosynthesis of vanillin and derivative natural products. Catalyzes the double carbon bond cleavage of ferulic acid to vanillin and of respective glucosides. This Glechoma hederacea (Ground-ivy) protein is Vanillin synthase.